The primary structure comprises 137 residues: Peptide methionine sulfoxide reductase MsrB (137 aa).

Positions 1–33 (MSNNQDRPGQITDESLRERLSPEAYAVTRRAGT) are disordered. A MsrB domain is found at 13–135 (DESLRERLSP…NSLSLDFKAA (123 aa)). Zn(2+) contacts are provided by Cys52, Cys55, Cys101, and Cys104. Catalysis depends on Cys124, which acts as the Nucleophile.

The protein belongs to the MsrB Met sulfoxide reductase family. Requires Zn(2+) as cofactor.

The catalysed reaction is L-methionyl-[protein] + [thioredoxin]-disulfide + H2O = L-methionyl-(R)-S-oxide-[protein] + [thioredoxin]-dithiol. The sequence is that of Peptide methionine sulfoxide reductase MsrB from Thioalkalivibrio sulfidiphilus (strain HL-EbGR7).